A 652-amino-acid chain; its full sequence is Fimbrin-4 (652 aa).

4 consecutive Calponin-homology (CH) domains span residues 116–233 (ESEK…KIQL), 261–364 (LAPE…HHRN), 388–494 (SREE…RYTM), and 509–617 (DITE…NWSL). Actin-binding regions lie at residues 116–364 (ESEK…HHRN) and 388–617 (SREE…NWSL). A disordered region spans residues 623-652 (TESTVSDDTDVSSVTEEISNLSTDDGSSDV). A compositionally biased stretch (polar residues) spans 640 to 652 (ISNLSTDDGSSDV).

In terms of assembly, interacts with F-actin.

The protein resides in the cytoplasm. The protein localises to the cytoskeleton. Its function is as follows. Cross-links actin filaments (F-actin). Stabilizes and prevents F-actin depolymerization mediated by profilin. May regulate actin cytoarchitecture, cell cycle, cell division, cell elongation and cytoplasmic tractus. The polypeptide is Fimbrin-4 (Arabidopsis thaliana (Mouse-ear cress)).